The following is a 338-amino-acid chain: Putative peptide import ATP-binding protein BMEII0863 (338 aa).

The 254-residue stretch at K10–L263 folds into the ABC transporter domain. G43–S50 is a binding site for ATP.

The protein belongs to the ABC transporter superfamily. As to quaternary structure, the complex is composed of two ATP-binding proteins (BMEII0863 and BMEII0864), two transmembrane proteins (BMEII0860 and BMEII0861) and a solute-binding protein (BMEII0859).

The protein localises to the cell inner membrane. In terms of biological role, probably part of an ABC transporter complex that could be involved in peptide import. Probably responsible for energy coupling to the transport system. This Brucella melitensis biotype 1 (strain ATCC 23456 / CCUG 17765 / NCTC 10094 / 16M) protein is Putative peptide import ATP-binding protein BMEII0863.